The sequence spans 442 residues: HTH-type transcriptional regulator NorG (442 aa).

The region spanning 2–46 is the HTH gntR-type domain; it reads KIPPQRQLAIQYNVNRVTIIKSIELLEAEGFIYTKVGSGTYVNDY. A DNA-binding region (H-T-H motif) is located at residues 6–25; sequence QRQLAIQYNVNRVTIIKSIE. Position 288 is an N6-(pyridoxal phosphate)lysine (K288).

The protein in the C-terminal section; belongs to the class-I pyridoxal-phosphate-dependent aminotransferase family. The cofactor is pyridoxal 5'-phosphate.

Positively regulates the expression of the NorB efflux pump and negatively regulates the expression of the AbcA efflux pump. Binds specifically to the promoters of norA, norB and norC and abcA genes. Could also have an aminotransferase activity. This is HTH-type transcriptional regulator NorG (norG) from Staphylococcus aureus (strain Mu50 / ATCC 700699).